The chain runs to 134 residues: MLSPKRTRFRKQHRGRMKGISSRGNHISFGKYALQALEPAWITSRQIEAGRRAMTRNARRGGKIWVRIFPDKPVTLRPAETRMGSGKGSPEYWVAVVKPGRILYEMGGVTENIARRAISLAASKMPKRTQFIIS.

Basic residues predominate over residues 1-17 (MLSPKRTRFRKQHRGRM). Positions 1 to 22 (MLSPKRTRFRKQHRGRMKGISS) are disordered.

Belongs to the universal ribosomal protein uL16 family. In terms of assembly, part of the 50S ribosomal subunit.

The protein resides in the plastid. It localises to the chloroplast. This is Large ribosomal subunit protein uL16c from Solanum tuberosum (Potato).